Consider the following 121-residue polypeptide: uncharacterized protein (121 aa).

The protein to E.coli YcjD and H.influenzae HI_1162.

This is an uncharacterized protein from Haemophilus influenzae (strain ATCC 51907 / DSM 11121 / KW20 / Rd).